Here is a 237-residue protein sequence, read N- to C-terminus: Protein GrpE (237 aa).

Positions 1 to 65 are disordered; it reads MTDSYKLPDN…DAREDDRDPT (65 aa). Basic and acidic residues predominate over residues 55–65; it reads VDAREDDRDPT.

Belongs to the GrpE family. As to quaternary structure, homodimer.

It localises to the cytoplasm. Its function is as follows. Participates actively in the response to hyperosmotic and heat shock by preventing the aggregation of stress-denatured proteins, in association with DnaK and GrpE. It is the nucleotide exchange factor for DnaK and may function as a thermosensor. Unfolded proteins bind initially to DnaJ; upon interaction with the DnaJ-bound protein, DnaK hydrolyzes its bound ATP, resulting in the formation of a stable complex. GrpE releases ADP from DnaK; ATP binding to DnaK triggers the release of the substrate protein, thus completing the reaction cycle. Several rounds of ATP-dependent interactions between DnaJ, DnaK and GrpE are required for fully efficient folding. The polypeptide is Protein GrpE (Corynebacterium efficiens (strain DSM 44549 / YS-314 / AJ 12310 / JCM 11189 / NBRC 100395)).